The sequence spans 695 residues: Large T antigen (695 aa).

Met1 is modified (N-acetylmethionine; by host). Residues 12 to 75 (ELMDLLGLER…VKVAHQPDFG (64 aa)) form the J domain. The binding to host RB1 protein and transforming activity stretch occupies residues 105–109 (LFCHE). A phosphoserine; by host mark is found at Ser114, Ser122, and Ser125. The interval 117–138 (EATADSQHSTPPKKKRKVEDPK) is disordered. Position 126 is a phosphothreonine; by host (Thr126). The Nuclear localization signal motif lies at 127–134 (PPKKKRKV). The T-ag OBD DNA-binding region spans 141-256 (PSDLHQFLSQ…EESIQGGLKE (116 aa)). The T-ag D1-type zinc-finger motif lies at 267–359 (TKQVSWKLIT…KRVDTLHMTR (93 aa)). Zn(2+) contacts are provided by Cys304, Cys307, His315, and His319. An SF3 helicase domain is found at 402–562 (KMDSVIFDFL…IYLRKSLQNS (161 aa)). 428-435 (GPIDSGKT) contributes to the ATP binding site. The disordered stretch occupies residues 634-695 (EDSETEDSGH…FKRPKTPPPK (62 aa)). The segment covering 645–661 (SSTESQSQCSSQVSDTS) has biased composition (low complexity). A compositionally biased stretch (basic and acidic residues) spans 666 to 679 (DSQRSDPHSQELHL). Position 687 is an N6-acetyllysine; by host (Lys687). The residue at position 691 (Thr691) is a Phosphothreonine; by host.

In terms of assembly, forms homohexamers in the presence of ATP. Interacts with host HDAC1. Interacts (via LXCXE domain) with host RB1; the interaction induces the aberrant dissociation of RB1-E2F1 complex thereby disrupting RB1's activity. Interacts (via LXCXE domain) with host pRB-related proteins RBL1 and RBL2. Interacts (via C-terminus) with host TOP1 and POLA1 allowing DNA replication. Interacts with host TP53, inhibiting TP53 binding to DNA. Interacts with host preinitiation complex components TBP, TFIIA and TFIID to regulate transcription initiation. Mg(2+) is required as a cofactor. Phosphorylated on both serine and threonine residues. Small t antigen inhibits the dephosphorylation by the AC form of PP2A. In terms of processing, O-Glycosylated near the C-terminal region. Post-translationally, acetylated by CBP in a TP53-dependent manner.

Its subcellular location is the host nucleus. It carries out the reaction Couples ATP hydrolysis with the unwinding of duplex DNA by translocating in the 3'-5' direction.. The enzyme catalyses ATP + H2O = ADP + phosphate + H(+). Functionally, isoform large T antigen is a key early protein essential for both driving viral replication and inducing cellular transformation. Plays a role in viral genome replication by driving entry of quiescent cells into the cell cycle and by autoregulating the synthesis of viral early mRNA. Displays highly oncogenic activities by corrupting the host cellular checkpoint mechanisms that guard cell division and the transcription, replication, and repair of DNA. Participates in the modulation of cellular gene expression preceeding viral DNA replication. This step involves binding to host key cell cycle regulators retinoblastoma protein RB1/pRb and TP53. Induces the disassembly of host E2F1 transcription factors from RB1, thus promoting transcriptional activation of E2F1-regulated S-phase genes. Inhibits host TP53 binding to DNA, abrogating the ability of TP53 to stimulate gene expression. Plays the role of a TFIID-associated factor (TAF) in transcription initiation for all three RNA polymerases, by stabilizing the TBP-TFIIA complex on promoters. Initiates viral DNA replication and unwinding via interactions with the viral origin of replication. Binds two adjacent sites in the SV40 origin. The replication fork movement is facilitated by Large T antigen helicase activity. Has processive 3'-5' DNA helicase activity which requires a short 3' single-stranded region and ATP. Activates the transcription of viral late mRNA, through host TBP and TFIIA stabilization. Interferes with histone deacetylation mediated by HDAC1, leading to activation of transcription. The protein is Large T antigen of BK polyomavirus (BKPyV).